The chain runs to 292 residues: Poly-beta-1,6-N-acetyl-D-glucosamine N-deacetylase (292 aa).

Residues 1–28 (MKYRKFIILVLSILIILPVSTLDGHHIA) form the signal peptide. The NodB homology domain maps to 114-292 (RSVWINFDDM…WDGFHEKDET (179 aa)).

It belongs to the polysaccharide deacetylase family.

It is found in the secreted. It localises to the cell wall. Functionally, catalyzes the N-deacetylation of poly-beta-1,6-N-acetyl-D-glucosamine (PNAG, also referred to as PIA), a biofilm adhesin polysaccharide. N-deacetylation is crucial for attachment of the polysaccharide to the bacterial cell surface; it leads to the introduction of positive charges in the otherwise neutral PIA polymer, allowing electrostatic interactions. The chain is Poly-beta-1,6-N-acetyl-D-glucosamine N-deacetylase (icaB) from Staphylococcus aureus (strain COL).